The sequence spans 577 residues: Arginine--tRNA ligase (577 aa).

Positions 122–132 (PNVAKEMHVGH) match the 'HIGH' region motif.

This sequence belongs to the class-I aminoacyl-tRNA synthetase family. As to quaternary structure, monomer.

It localises to the cytoplasm. It carries out the reaction tRNA(Arg) + L-arginine + ATP = L-arginyl-tRNA(Arg) + AMP + diphosphate. This Aliivibrio fischeri (strain ATCC 700601 / ES114) (Vibrio fischeri) protein is Arginine--tRNA ligase.